The sequence spans 344 residues: tRNA N6-adenosine threonylcarbamoyltransferase (344 aa).

Fe cation-binding residues include His-111 and His-115. Residues Leu-134–Gly-138, Asp-167, Gly-180, and Asn-273 each bind substrate. Residue Asp-301 coordinates Fe cation.

The protein belongs to the KAE1 / TsaD family. Fe(2+) is required as a cofactor.

It localises to the cytoplasm. It carries out the reaction L-threonylcarbamoyladenylate + adenosine(37) in tRNA = N(6)-L-threonylcarbamoyladenosine(37) in tRNA + AMP + H(+). Functionally, required for the formation of a threonylcarbamoyl group on adenosine at position 37 (t(6)A37) in tRNAs that read codons beginning with adenine. Is involved in the transfer of the threonylcarbamoyl moiety of threonylcarbamoyl-AMP (TC-AMP) to the N6 group of A37, together with TsaE and TsaB. TsaD likely plays a direct catalytic role in this reaction. This chain is tRNA N6-adenosine threonylcarbamoyltransferase, found in Cupriavidus pinatubonensis (strain JMP 134 / LMG 1197) (Cupriavidus necator (strain JMP 134)).